Consider the following 240-residue polypeptide: Enoyl-CoA delta isomerase 1, peroxisomal (240 aa).

The Microbody targeting signal motif lies at Ser238–Leu240.

The protein belongs to the enoyl-CoA hydratase/isomerase family.

Its subcellular location is the peroxisome. The catalysed reaction is a (3Z)-enoyl-CoA = a 4-saturated (2E)-enoyl-CoA. It carries out the reaction a (3E)-enoyl-CoA = a 4-saturated (2E)-enoyl-CoA. Its pathway is lipid metabolism; fatty acid beta-oxidation. Functionally, able to isomerize both 3-cis and 3-trans double bonds into the 2-trans form in a range of enoyl-CoA species. Essential for the beta oxidation of unsaturated fatty acids. This Arabidopsis thaliana (Mouse-ear cress) protein is Enoyl-CoA delta isomerase 1, peroxisomal.